Here is a 582-residue protein sequence, read N- to C-terminus: DNA mismatch repair protein MutL (582 aa).

Belongs to the DNA mismatch repair MutL/HexB family.

In terms of biological role, this protein is involved in the repair of mismatches in DNA. It is required for dam-dependent methyl-directed DNA mismatch repair. May act as a 'molecular matchmaker', a protein that promotes the formation of a stable complex between two or more DNA-binding proteins in an ATP-dependent manner without itself being part of a final effector complex. The protein is DNA mismatch repair protein MutL of Acidiphilium cryptum (strain JF-5).